A 323-amino-acid polypeptide reads, in one-letter code: tRNA U34 carboxymethyltransferase (323 aa).

Carboxy-S-adenosyl-L-methionine-binding positions include K91, W105, K110, G130, 152–154 (DPT), 181–182 (IE), M196, Y200, and R315.

It belongs to the class I-like SAM-binding methyltransferase superfamily. CmoB family. As to quaternary structure, homotetramer.

The enzyme catalyses carboxy-S-adenosyl-L-methionine + 5-hydroxyuridine(34) in tRNA = 5-carboxymethoxyuridine(34) in tRNA + S-adenosyl-L-homocysteine + H(+). Its function is as follows. Catalyzes carboxymethyl transfer from carboxy-S-adenosyl-L-methionine (Cx-SAM) to 5-hydroxyuridine (ho5U) to form 5-carboxymethoxyuridine (cmo5U) at position 34 in tRNAs. In Salmonella paratyphi A (strain ATCC 9150 / SARB42), this protein is tRNA U34 carboxymethyltransferase.